The chain runs to 402 residues: Tyrosine--tRNA ligase (402 aa).

Residues 47-56 carry the 'HIGH' region motif; the sequence is PTAPDLHLGH. Residues 232 to 236 carry the 'KMSKS' region motif; it reads KMSKS. Lys235 provides a ligand contact to ATP. Residues 341-401 enclose the S4 RNA-binding domain; that stretch reads VGVLDVLKQI…GKKRFMKLNI (61 aa).

This sequence belongs to the class-I aminoacyl-tRNA synthetase family. TyrS type 2 subfamily. As to quaternary structure, homodimer.

The protein resides in the cytoplasm. It carries out the reaction tRNA(Tyr) + L-tyrosine + ATP = L-tyrosyl-tRNA(Tyr) + AMP + diphosphate + H(+). Catalyzes the attachment of tyrosine to tRNA(Tyr) in a two-step reaction: tyrosine is first activated by ATP to form Tyr-AMP and then transferred to the acceptor end of tRNA(Tyr). The chain is Tyrosine--tRNA ligase from Helicobacter pylori (strain J99 / ATCC 700824) (Campylobacter pylori J99).